Reading from the N-terminus, the 111-residue chain is Large ribosomal subunit protein uL22 (111 aa).

The protein belongs to the universal ribosomal protein uL22 family. As to quaternary structure, part of the 50S ribosomal subunit.

Functionally, this protein binds specifically to 23S rRNA; its binding is stimulated by other ribosomal proteins, e.g. L4, L17, and L20. It is important during the early stages of 50S assembly. It makes multiple contacts with different domains of the 23S rRNA in the assembled 50S subunit and ribosome. The globular domain of the protein is located near the polypeptide exit tunnel on the outside of the subunit, while an extended beta-hairpin is found that lines the wall of the exit tunnel in the center of the 70S ribosome. The chain is Large ribosomal subunit protein uL22 from Geotalea uraniireducens (strain Rf4) (Geobacter uraniireducens).